A 623-amino-acid polypeptide reads, in one-letter code: Glutathione import ATP-binding protein GsiA (623 aa).

ABC transporter domains follow at residues 15–269 (VENL…RALL) and 314–564 (LRVR…RKLL). ATP contacts are provided by residues 49–56 (GESGSGKS) and 357–364 (GESGSGKS).

It belongs to the ABC transporter superfamily. Glutathione importer (TC 3.A.1.5.11) family. The complex is composed of two ATP-binding proteins (GsiA), two transmembrane proteins (GsiC and GsiD) and a solute-binding protein (GsiB).

The protein resides in the cell inner membrane. It catalyses the reaction glutathione(out) + ATP + H2O = glutathione(in) + ADP + phosphate + H(+). In terms of biological role, part of the ABC transporter complex GsiABCD involved in glutathione import. Responsible for energy coupling to the transport system. This Shigella boydii serotype 4 (strain Sb227) protein is Glutathione import ATP-binding protein GsiA.